The primary structure comprises 263 residues: Alpha-tubulin N-acetyltransferase 2 (263 aa).

Residues 1–181 (MEIAFDLSSI…NKYAVFPNFF (181 aa)) form the N-acetyltransferase domain. An acetyl-CoA-binding site is contributed by 115–128 (FFIVPTEQRSGNGF). 2 disordered regions span residues 191–224 (TPRQTKRASRASSAVSSHTTSRNTSPIGRNRPRH) and 236–263 (FPRGRSVIDPNSPAGFKLTRDQRHEPIW). Positions 200–212 (RASSAVSSHTTSR) are enriched in low complexity. Residues 253–263 (LTRDQRHEPIW) are compositionally biased toward basic and acidic residues.

It belongs to the acetyltransferase ATAT1 family.

It carries out the reaction L-lysyl-[alpha-tubulin] + acetyl-CoA = N(6)-acetyl-L-lysyl-[alpha-tubulin] + CoA + H(+). In terms of biological role, specifically acetylates 'Lys-40' in alpha-tubulin/mec-12 on the lumenal side of microtubules. Promotes microtubule destabilization and accelerates microtubule dynamics; this activity may be independent of acetylation activity. Acetylates alpha-tubulin with a slow enzymatic rate, due to a catalytic site that is not optimized for acetyl transfer. Enters the microtubule through each end and diffuses quickly throughout the lumen of microtubules. Acetylates only long/old microtubules because of its slow acetylation rate since it does not have time to act on dynamically unstable microtubules before the enzyme is released. Required for the maintenance of touch receptor neurons and possibly other type of neurons involved in locomotion. The polypeptide is Alpha-tubulin N-acetyltransferase 2 (atat-2) (Caenorhabditis briggsae).